We begin with the raw amino-acid sequence, 708 residues long: MPSTLTINGKAPIVAYAELIAARIVNALAPNSIAIKLVDDKKAPAAKLDDATEDVFNKITSKFAAIFDNGDKEQVAKWVNLAQKELVIKNFAKLSQSLETLDSQLNLRTFILGGLKYSAADVACWGALRSNGMCGSIIKNKVDVNVSRWYTLLEMDPIFGEAHDFLSKSLLELKKSANVGKKKETHKANFEIDLPDAKMGEVVTRFPPEPSGYLHIGHAKAALLNQYFAQAYKGKLIIRFDDTNPSKEKEEFQDSILEDLDLLGIKGDRITYSSDYFQEMYDYCVQMIKDGKAYCDDTPTEKMREERMDGVASARRDRSVEENLRIFTEEMKNGTEEGLKNCVRAKIDYKALNKTLRDPVIYRCNLTPHHRTGSTWKIYPTYDFCVPIVDAIEGVTHALRTIEYRDRNAQYDWMLQALRLRKVHIWDFARINFVRTLLSKRKLQWMVDKDLVGNWDDPRFPTVRGVRRRGMTVEGLRNFVLSQGPSRNVINLEWNLIWAFNKKVIDPIAPRHTAIVNPVKIHLEGSEAPQEPKIEMKPKHKKNPAVGEKKVIYYKDIVVDKDDADVINVDEEVTLMDWGNVIITKKNDDGSMVAKLNLEGDFKKTKHKLTWLADTKDVVPVDLVDFDHLITKDRLEEDESFEDFLTPQTEFHTDAIADLNVKDMKIGDIIQFERKGYYRLDALPKDGKPYVFFTIPDGKSVNKYGAKK.

Interaction with ARC1 regions lie at residues 106 to 115 and 141 to 157; these read NLRTFILGGL and KVDVNVSRWYTLLEMDP. 205 to 207 is an L-glutamate binding site; that stretch reads RFP. A 'HIGH' region motif is present at residues 210–219; sequence PSGYLHIGHA. Position 215 (His215) interacts with ATP. Asp241 contributes to the L-glutamate binding site. Thr300 carries the post-translational modification Phosphothreonine. Residues 382-386 and Arg400 each bind L-glutamate; that span reads YDFCV. ATP is bound by residues Glu403 and 437-441; that span reads LLSKR. Residues 437–441 carry the 'KMSKS' region motif; sequence LLSKR.

The protein belongs to the class-I aminoacyl-tRNA synthetase family. Glutamate--tRNA ligase type 2 subfamily. Component of a yeast aminoacyl-tRNA synthase (aaRS) complex formed by methionyl-tRNA synthase MES1, glutamyl-tRNA synthase GUS1 and the tRNA aminoacylation cofactor ARC1 in a stoichiometric complex. Interacts (via N-ter) with ARC1 (via N-ter). Can also form a stable binary complex with ARC1 that is functional in terms of aminoacylation. ARC1 increases the affinity for cognate tRNAs due to the presence of a tRNA binding domain in the middle and C-terminal part of ARC1.

Its subcellular location is the cytoplasm. The protein resides in the mitochondrion. The enzyme catalyses tRNA(Glu) + L-glutamate + ATP = L-glutamyl-tRNA(Glu) + AMP + diphosphate. Its function is as follows. Catalyzes the attachment of glutamate to tRNA(Glu) in a two-step reaction: glutamate is first activated by ATP to form Glu-AMP and then transferred to the acceptor end of tRNA(Glu). In mitochondria, constitutes the nondiscriminating glutamyl-tRNA synthase that generates the mitochondrial mischarged glutamyl-tRNA(Gln) substrate for the tRNA-dependent amidotransferase (AdT), which generates mitochondrial glutaminyl-tRNA(Gln) by transamidation of glutamyl-tRNA(Gln). The protein is Glutamate--tRNA ligase, cytoplasmic (GUS1) of Saccharomyces cerevisiae (strain ATCC 204508 / S288c) (Baker's yeast).